A 282-amino-acid polypeptide reads, in one-letter code: Urease accessory protein UreD (282 aa).

Belongs to the UreD family. As to quaternary structure, ureD, UreF and UreG form a complex that acts as a GTP-hydrolysis-dependent molecular chaperone, activating the urease apoprotein by helping to assemble the nickel containing metallocenter of UreC. The UreE protein probably delivers the nickel.

It is found in the cytoplasm. Required for maturation of urease via the functional incorporation of the urease nickel metallocenter. This is Urease accessory protein UreD from Methylobacterium sp. (strain 4-46).